A 223-amino-acid polypeptide reads, in one-letter code: Putative germin-like protein 2-2 (223 aa).

The first 28 residues, 1–28, serve as a signal peptide directing secretion; it reads MAAVGACFLQQLAVVALLALWCSHGAIA. Cysteines 38 and 53 form a disulfide. The 151-residue stretch at 67–217 folds into the Cupin type-1 domain; the sequence is SGLHMAGNTT…AFQVDKNIID (151 aa). 2 N-linked (GlcNAc...) asparagine glycosylation sites follow: Asn-74 and Asn-82. Positions 115, 117, 122, and 163 each coordinate Mn(2+). Asn-168 is a glycosylation site (N-linked (GlcNAc...) asparagine).

Belongs to the germin family. Oligomer (believed to be a pentamer but probably hexamer).

Its subcellular location is the secreted. It is found in the extracellular space. It localises to the apoplast. In terms of biological role, may play a role in plant defense. Probably has no oxalate oxidase activity even if the active site is conserved. This Oryza sativa subsp. japonica (Rice) protein is Putative germin-like protein 2-2.